The following is a 457-amino-acid chain: Exodeoxyribonuclease 7 large subunit (457 aa).

It belongs to the XseA family. Heterooligomer composed of large and small subunits.

Its subcellular location is the cytoplasm. It catalyses the reaction Exonucleolytic cleavage in either 5'- to 3'- or 3'- to 5'-direction to yield nucleoside 5'-phosphates.. Functionally, bidirectionally degrades single-stranded DNA into large acid-insoluble oligonucleotides, which are then degraded further into small acid-soluble oligonucleotides. This is Exodeoxyribonuclease 7 large subunit from Citrobacter koseri (strain ATCC BAA-895 / CDC 4225-83 / SGSC4696).